The primary structure comprises 111 residues: Large ribosomal subunit protein P2w (111 aa).

Residues 63 to 111 (ASVPSGGGVAVSAAPSSGGGGAAAPAEKKEAKKEEKEESDDDMGFSLFE) form a disordered region. The span at 88 to 98 (AEKKEAKKEEK) shows a compositional bias: basic and acidic residues. The residue at position 101 (Ser-101) is a Phosphoserine.

This sequence belongs to the eukaryotic ribosomal protein P1/P2 family. As to quaternary structure, P1 and P2 exist as dimers at the large ribosomal subunit.

Its function is as follows. Plays an important role in the elongation step of protein synthesis. This is Large ribosomal subunit protein P2w (RPP2D) from Arabidopsis thaliana (Mouse-ear cress).